We begin with the raw amino-acid sequence, 86 residues long: YcgL domain-containing protein XAC4085 (86 aa).

In terms of domain architecture, YcgL spans 1 to 83 (MHAYVYKSQR…PKTIVLAGEC (83 aa)).

This Xanthomonas axonopodis pv. citri (strain 306) protein is YcgL domain-containing protein XAC4085.